Consider the following 582-residue polypeptide: Probable DNA ligase (582 aa).

Residue E243 coordinates ATP. The N6-AMP-lysine intermediate role is filled by K245. Positions 250, 265, 295, 335, 410, and 416 each coordinate ATP.

Belongs to the ATP-dependent DNA ligase family. Requires Mg(2+) as cofactor.

It catalyses the reaction ATP + (deoxyribonucleotide)n-3'-hydroxyl + 5'-phospho-(deoxyribonucleotide)m = (deoxyribonucleotide)n+m + AMP + diphosphate.. Its function is as follows. DNA ligase that seals nicks in double-stranded DNA during DNA replication, DNA recombination and DNA repair. This Dictyoglomus thermophilum (strain ATCC 35947 / DSM 3960 / H-6-12) protein is Probable DNA ligase.